A 243-amino-acid polypeptide reads, in one-letter code: Probable heat shock transcription factor (243 aa).

The DNA-binding element occupies 9–102; it reads INKFIRRLYK…GDNLLPCIQR (94 aa). Positions 121–164 are involved in trimerization; the sequence is QLQDLLQYLNNQNFKLEGEIKSLKDRVDQQDCTINGLVQLLTRI.

Belongs to the HSF family. In terms of assembly, homotrimer. Homotrimerization increases the affinity of HSF1 to DNA.

The protein resides in the nucleus. In terms of biological role, DNA-binding transcription factor that specifically binds heat shock promoter elements (HSE) and activates transcription. In Vairimorpha ceranae (strain BRL01) (Microsporidian parasite), this protein is Probable heat shock transcription factor.